The primary structure comprises 465 residues: Gamma-aminobutyric acid receptor subunit alpha-6 (465 aa).

The first 19 residues, 1-19 (MALLIAWVCVAVSIEKALG), serve as a signal peptide directing secretion. Topologically, residues 20–243 (GQGDGGDLYS…FHLQRKMGYF (224 aa)) are extracellular. N31 carries an N-linked (GlcNAc...) asparagine glycan. R84 serves as a coordination point for 4-aminobutanoate. 2 N-linked (GlcNAc...) asparagine glycosylation sites follow: N128 and N141. Residue T147 participates in 4-aminobutanoate binding. A disulfide bond links C156 and C170. The helical transmembrane segment at 244 to 264 (MIQIYTPCIMTVILSQVSFWI) threads the bilayer. Residues 265-270 (NKESVP) are Cytoplasmic-facing. The helical transmembrane segment at 271–290 (ARTVFGITTVLTMTTLSISA) threads the bilayer. Topologically, residues 291–304 (RHSLPKVSYATAMD) are extracellular. A helical membrane pass occupies residues 305-325 (WFIAVCFAFVFSALIEFAAVN). Residues 326–424 (YFTNLQTQRA…GTSKIDQYSR (99 aa)) are Cytoplasmic-facing. The disordered stretch occupies residues 392–415 (NSASQCQPVSAPPPAPPAPPPVGG). Positions 401 to 413 (SAPPPAPPAPPPV) are enriched in pro residues. Residues 425–445 (ILFPVAFAGFNLVYWVVYLSK) form a helical membrane-spanning segment. The Extracellular portion of the chain corresponds to 446–465 (DTMEFFEPTAMHLRNDHQSN).

The protein belongs to the ligand-gated ion channel (TC 1.A.9) family. Gamma-aminobutyric acid receptor (TC 1.A.9.5) subfamily. GABRA6 sub-subfamily. Heteropentamer, formed by a combination of alpha (GABRA1-6), beta (GABRB1-3), gamma (GABRG1-3), delta (GABRD), epsilon (GABRE), rho (GABRR1-3), pi (GABRP) and theta (GABRQ) chains, each subunit exhibiting distinct physiological and pharmacological properties. As to expression, expressed in brain, in cerebellar granule cells.

The protein localises to the postsynaptic cell membrane. Its subcellular location is the cell membrane. It catalyses the reaction chloride(in) = chloride(out). Functionally, alpha subunit of the heteropentameric ligand-gated chloride channel gated by gamma-aminobutyric acid (GABA), a major inhibitory neurotransmitter in the brain. GABA-gated chloride channels, also named GABA(A) receptors (GABAAR), consist of five subunits arranged around a central pore and contain GABA active binding site(s) located at the alpha and beta subunit interface(s). When activated by GABA, GABAARs selectively allow the flow of chloride anions across the cell membrane down their electrochemical gradient. This Gallus gallus (Chicken) protein is Gamma-aminobutyric acid receptor subunit alpha-6 (GABRA6).